The primary structure comprises 548 residues: (2S)-methylsuccinyl-CoA dehydrogenase (548 aa).

Residues 282–291 (AVFTEPNTGS) and 315–317 (WIT) each bind FAD. S291 serves as a coordination point for substrate. 409–412 (ESAR) provides a ligand contact to substrate. FAD-binding positions include R437 and 505–509 (QIHGG). The active-site Proton acceptor is the E532. An FAD-binding site is contributed by 534–536 (AAE).

The protein belongs to the acyl-CoA dehydrogenase family. As to quaternary structure, homodimer. FAD is required as a cofactor.

The catalysed reaction is (2S)-methylsuccinyl-CoA + oxidized [electron-transfer flavoprotein] + H(+) = 2-methylfumaryl-CoA + reduced [electron-transfer flavoprotein]. Functionally, involved in the ethylmalonyl-CoA pathway, a new acetyl-CoA assimilation strategy that operates in a number of bacteria and replaces the glyoxylate cycle. Catalyzes the oxidation of (2S)-methylsuccinyl-CoA to yield mesaconyl-(C1)-CoA. Highly specific for (S)-methylsuccinyl-CoA. This is (2S)-methylsuccinyl-CoA dehydrogenase from Cereibacter sphaeroides (Rhodobacter sphaeroides).